Reading from the N-terminus, the 376-residue chain is Succinyl-diaminopimelate desuccinylase (376 aa).

Residue H67 coordinates Zn(2+). D69 is a catalytic residue. Residue D100 coordinates Zn(2+). The active-site Proton acceptor is the E134. Residues E135, E163, and H349 each coordinate Zn(2+).

It belongs to the peptidase M20A family. DapE subfamily. Homodimer. Zn(2+) serves as cofactor. Co(2+) is required as a cofactor.

It carries out the reaction N-succinyl-(2S,6S)-2,6-diaminopimelate + H2O = (2S,6S)-2,6-diaminopimelate + succinate. The protein operates within amino-acid biosynthesis; L-lysine biosynthesis via DAP pathway; LL-2,6-diaminopimelate from (S)-tetrahydrodipicolinate (succinylase route): step 3/3. Its function is as follows. Catalyzes the hydrolysis of N-succinyl-L,L-diaminopimelic acid (SDAP), forming succinate and LL-2,6-diaminopimelate (DAP), an intermediate involved in the bacterial biosynthesis of lysine and meso-diaminopimelic acid, an essential component of bacterial cell walls. This chain is Succinyl-diaminopimelate desuccinylase, found in Shewanella woodyi (strain ATCC 51908 / MS32).